The primary structure comprises 652 residues: DNA ligase (652 aa).

NAD(+) contacts are provided by residues 29-33, 78-79, and E107; these read DSEYD and SL. K109 (N6-AMP-lysine intermediate) is an active-site residue. NAD(+) is bound by residues R130, E164, K278, and K302. C395, C398, C413, and C418 together coordinate Zn(2+). Residues 577–652 form the BRCT domain; that stretch reads VADAALSGLT…VRDEAWLESL (76 aa).

The protein belongs to the NAD-dependent DNA ligase family. LigA subfamily. The cofactor is Mg(2+). Mn(2+) serves as cofactor.

It catalyses the reaction NAD(+) + (deoxyribonucleotide)n-3'-hydroxyl + 5'-phospho-(deoxyribonucleotide)m = (deoxyribonucleotide)n+m + AMP + beta-nicotinamide D-nucleotide.. In terms of biological role, DNA ligase that catalyzes the formation of phosphodiester linkages between 5'-phosphoryl and 3'-hydroxyl groups in double-stranded DNA using NAD as a coenzyme and as the energy source for the reaction. It is essential for DNA replication and repair of damaged DNA. The chain is DNA ligase from Streptococcus pneumoniae (strain Hungary19A-6).